The following is a 76-amino-acid chain: ATP synthase subunit 9, mitochondrial (76 aa).

The next 2 membrane-spanning stretches (helical) occupy residues 14-34 (IATIGLLGAGIGIAIVFAALI) and 52-72 (ILGFALSEATGLFCLMISFLL).

It belongs to the ATPase C chain family. In terms of assembly, F-type ATPases have 2 components, CF(1) - the catalytic core - and CF(0) - the membrane proton channel. CF(1) has five subunits: alpha(3), beta(3), gamma(1), delta(1), epsilon(1). CF(0) has three main subunits: a, b and c.

Its subcellular location is the mitochondrion membrane. Its function is as follows. Mitochondrial membrane ATP synthase (F(1)F(0) ATP synthase or Complex V) produces ATP from ADP in the presence of a proton gradient across the membrane which is generated by electron transport complexes of the respiratory chain. F-type ATPases consist of two structural domains, F(1) - containing the extramembraneous catalytic core and F(0) - containing the membrane proton channel, linked together by a central stalk and a peripheral stalk. During catalysis, ATP synthesis in the catalytic domain of F(1) is coupled via a rotary mechanism of the central stalk subunits to proton translocation. Part of the complex F(0) domain. A homomeric c-ring of probably 10 subunits is part of the complex rotary element. The sequence is that of ATP synthase subunit 9, mitochondrial (ATP9) from Wickerhamomyces canadensis (Yeast).